The sequence spans 551 residues: Serendipity locus protein alpha (551 aa).

It is found in the cytoplasm. The protein localises to the cell membrane. Its function is as follows. Required for the cellularization of the syncytial blastoderm embryo. Involved in the localization of the actin filaments just prior to and during plasma membrane invagination. Sry-alpha together with nullo and bnk may provide auxiliary functions, by acting both to stabilize a large and dynamic microfilament structure and regulate its functions. The protein is Serendipity locus protein alpha (Sry-alpha) of Drosophila pseudoobscura pseudoobscura (Fruit fly).